Consider the following 236-residue polypeptide: Leucyl/phenylalanyl-tRNA--protein transferase (236 aa).

It belongs to the L/F-transferase family.

It localises to the cytoplasm. It catalyses the reaction N-terminal L-lysyl-[protein] + L-leucyl-tRNA(Leu) = N-terminal L-leucyl-L-lysyl-[protein] + tRNA(Leu) + H(+). The enzyme catalyses N-terminal L-arginyl-[protein] + L-leucyl-tRNA(Leu) = N-terminal L-leucyl-L-arginyl-[protein] + tRNA(Leu) + H(+). The catalysed reaction is L-phenylalanyl-tRNA(Phe) + an N-terminal L-alpha-aminoacyl-[protein] = an N-terminal L-phenylalanyl-L-alpha-aminoacyl-[protein] + tRNA(Phe). Its function is as follows. Functions in the N-end rule pathway of protein degradation where it conjugates Leu, Phe and, less efficiently, Met from aminoacyl-tRNAs to the N-termini of proteins containing an N-terminal arginine or lysine. In Aliivibrio salmonicida (strain LFI1238) (Vibrio salmonicida (strain LFI1238)), this protein is Leucyl/phenylalanyl-tRNA--protein transferase.